Here is a 575-residue protein sequence, read N- to C-terminus: Serine/threonine-protein kinase Pink1, mitochondrial (575 aa).

Residues 1–51 (MSLLAYTNLLLQNGRIFRYYKKANIKKFIKKIIKLDLKSTPSEASVSRQTF) constitute a mitochondrion transit peptide. At 52–94 (LSTGLNSVKNAVQLQARKLLINNVLERVTPTLNSDLKKKAAKR) the chain is on the mitochondrial intermembrane side. Residues 95-118 (LFYGDSAPFFALVGVSLASGSGLL) traverse the membrane as a helical segment. The Cytoplasmic portion of the chain corresponds to 119 to 575 (TKDDELEGIC…KWIQELHIYN (457 aa)). Lys-193 is an ATP binding site. Phosphoserine; by autocatalysis occurs at positions 202 and 204. Glu-214 contacts Mg(2+). Residue Thr-305 is modified to Phosphothreonine; by autocatalysis. Asp-334 functions as the Proton acceptor in the catalytic mechanism. Mg(2+)-binding residues include Asn-339 and Asp-357.

Belongs to the protein kinase superfamily. Ser/Thr protein kinase family. Mg(2+) is required as a cofactor. In terms of processing, proteolytically cleaved. In healthy cells, the precursor is continuously imported into mitochondria where it is proteolytically cleaved into its short form by the mitochondrial rhomboid protease rho-7 (8231301). The short form is then released into the cytosol where it rapidly undergoes proteasome-dependent degradation. In unhealthy cells, when cellular stress conditions lead to the loss of mitochondrial membrane potential, mitochondrial import is impaired leading to the precursor accumulating on the outer mitochondrial membrane (OMM). Autophosphorylated. Autophosphorylated on Ser-202, which activates kinase activity. Loss of mitochondrial membrane potential results in the precursor accumulating on the outer mitochondrial membrane (OMM) where it is activated by autophosphorylation at Ser-202. Autophosphorylation is sufficient and essential for selective recruitment of park to depolarized mitochondria, likely via Pink1-dependent phosphorylation of polyubiquitin chains. Also autophosphorylated at Ser-204 and Thr-305.

The protein resides in the mitochondrion outer membrane. It localises to the mitochondrion inner membrane. Its subcellular location is the cytoplasm. It is found in the cytosol. The enzyme catalyses L-seryl-[protein] + ATP = O-phospho-L-seryl-[protein] + ADP + H(+). The catalysed reaction is L-threonyl-[protein] + ATP = O-phospho-L-threonyl-[protein] + ADP + H(+). Its function is as follows. Acts as a serine/threonine-protein kinase. Exhibits a substrate preference for proline at position P+1 and a general preference at several residues for basic residues such as arginine. Also exhibits moderate preferences for a phosphotyrosine at position P-3 and a tryptophan at P-5. Critical to mitochondrial homeostasis it mediates several pathways that maintain mitochondrial health and function Protects against mitochondrial dysfunction during cellular stress by phosphorylating mitochondrial proteins such as park and likely Drp1, to coordinate mitochondrial quality control mechanisms that remove and replace dysfunctional mitochondrial components. Depending on the severity of mitochondrial damage and/or dysfunction, activity ranges from preventing apoptosis and stimulating mitochondrial biogenesis to regulating mitochondrial dynamics and eliminating severely damaged mitochondria via mitophagy. Appears to be particularly important in maintaining the physiology and function of cells with high energy demands that are undergoing stress or altered metabolic environment, including spermatids, muscle cells and neurons such as the dopaminergic (DA) neurons. Mediates the translocation and activation of park at the outer membrane (OMM) of dysfunctional/depolarized mitochondria. At the OMM of damaged mitochondria, phosphorylates pre-existing polyubiquitin chains, the Pink1-phosphorylated polyubiquitin then recruits park from the cytosol to the OMM where park is fully activated by phosphorylation at 'Ser-94' by Pink1. When cellular stress results in irreversible mitochondrial damage, functions with park to promote the clearance of dysfunctional and/or depolarized mitochondria by selective autophagy (mitophagy). The Pink1-park pathway also promotes fission and/or inhibits fusion of damaged mitochondria, by phosphorylating and thus promoting the park-dependent degradation of proteins involved in mitochondrial fusion/fission such as Marf, Opa1 and fzo. This prevents the refusion of unhealthy mitochondria with the mitochondrial network or initiates mitochondrial fragmentation facilitating their later engulfment by autophagosomes. Also likely to promote mitochondrial fission independently of park and Atg7-mediated mitophagy, via the phosphorylation and activation of Drp1. Regulates motility of damaged mitochondria by phosphorylating Miro which likely promotes its park-dependent degradation by the proteasome; in motor neurons, this inhibits mitochondrial intracellular anterograde transport along the axons which probably increases the chance of the mitochondria being eliminated in the soma. The Pink1-park pathway is also involved in mitochondrial regeneration processes such as promoting mitochondrial biogenesis, activating localized mitochondrial repair, promoting selective turnover of mitochondrial proteins and initiating the mitochondrial import of endogenous proteins. Involved in mitochondrial biogenesis by promoting the park-dependent ubiquitination of transcriptional repressor Paris which leads to its subsequent proteasomal degradation and allows activation of the transcription factor srl. Functions with park to promote localized mitochondrial repair by activating the translation of specific nuclear-encoded mitochondrial RNAs (nc-mtRNAs) on the mitochondrial surface, including several key electron transport chain component nc-mtRNAs. During oogenesis, phosphorylates and inactivates larp on the membrane of defective mitochondria, thus impairing local translation and mtDNA replication and consequently, reducing transmission of deleterious mtDNA mutations to the mature oocyte. Phosphorylates the mitochondrial acyl-CoA dehydrogenase Mcad, and appears to be important for maintaining fatty acid and amino acid metabolism via a mechanism that is independent of it's role in maintaining production of ATP. This is Serine/threonine-protein kinase Pink1, mitochondrial from Pediculus humanus subsp. corporis (Body louse).